The following is a 220-amino-acid chain: Probable transcriptional regulator NRG2 (220 aa).

2 C2H2-type zinc fingers span residues 153–175 and 181–205; these read HFCK…NRIH and HICP…YRTH.

It localises to the nucleus. Functionally, transcriptional repressor. This chain is Probable transcriptional regulator NRG2 (NRG2), found in Saccharomyces cerevisiae (strain ATCC 204508 / S288c) (Baker's yeast).